Here is a 32-residue protein sequence, read N- to C-terminus: DNA-binding protein HU (32 aa).

Belongs to the bacterial histone-like protein family.

In terms of biological role, histone-like DNA-binding protein which is capable of wrapping DNA to stabilize it, and thus to prevent its denaturation under extreme environmental conditions. This Synechocystis sp. (strain PCC 6701) protein is DNA-binding protein HU (hup).